We begin with the raw amino-acid sequence, 345 residues long: Probable aldo-keto reductase 4 (345 aa).

Tyr-63 acts as the Proton donor in catalysis. His-130 is a binding site for substrate. NADP(+) is bound at residue 209–219 (SPLGRGFFASG).

Belongs to the aldo/keto reductase family.

This Arabidopsis thaliana (Mouse-ear cress) protein is Probable aldo-keto reductase 4.